The sequence spans 438 residues: Adenosylhomocysteinase (438 aa).

Positions 64, 139, and 164 each coordinate substrate. Position 165 to 167 (165 to 167) interacts with NAD(+); sequence TTT. Residues Lys194 and Asp198 each contribute to the substrate site. Residues Asn199, 228 to 233, Glu251, Asn286, 307 to 309, and Asn352 each bind NAD(+); these read GYGDVG and IGH.

This sequence belongs to the adenosylhomocysteinase family. The cofactor is NAD(+).

It localises to the cytoplasm. It carries out the reaction S-adenosyl-L-homocysteine + H2O = L-homocysteine + adenosine. Its pathway is amino-acid biosynthesis; L-homocysteine biosynthesis; L-homocysteine from S-adenosyl-L-homocysteine: step 1/1. In terms of biological role, may play a key role in the regulation of the intracellular concentration of adenosylhomocysteine. The protein is Adenosylhomocysteinase of Coxiella burnetii (strain Dugway 5J108-111).